The sequence spans 110 residues: uncharacterized protein (110 aa).

A run of 3 helical transmembrane segments spans residues 32-52 (VLNV…ALVP), 57-77 (YTHM…CICI), and 90-110 (FLAS…TFVI).

The protein localises to the membrane. May play a role in proper chromosome segregation. Suppresses the high-frequency loss of mini-chromosomes when overexpressed, and this suppression is completely dependent on silencing protein SIR4. This is an uncharacterized protein from Saccharomyces cerevisiae (strain ATCC 204508 / S288c) (Baker's yeast).